The sequence spans 71 residues: Disintegrin ussuristatin-2 (71 aa).

The Disintegrin domain occupies 1–71 (EAGEECDCGA…QSADCPRNGF (71 aa)). 6 disulfides stabilise this stretch: Cys-6–Cys-21, Cys-8–Cys-16, Cys-15–Cys-38, Cys-29–Cys-35, Cys-34–Cys-59, and Cys-47–Cys-66. The short motif at 51-53 (KGD) is the Cell attachment site; atypical (KGD) element.

This sequence belongs to the venom metalloproteinase (M12B) family. P-II subfamily. P-IId sub-subfamily. In terms of assembly, homodimer. As to expression, expressed by the venom gland.

The protein localises to the secreted. In terms of biological role, suppress platelet aggregation induced by ADP, collagen, thrombin, and epinephrine (IC(50)=170-330 nM). Also dose-dependently inhibits the adhesion of human melanoma cells to fibrinogen but not to fibronectin. The polypeptide is Disintegrin ussuristatin-2 (Gloydius ussuriensis (Ussuri mamushi)).